The primary structure comprises 95 residues: Small ribosomal subunit protein bS6 (95 aa).

This sequence belongs to the bacterial ribosomal protein bS6 family.

Functionally, binds together with bS18 to 16S ribosomal RNA. This is Small ribosomal subunit protein bS6 from Bacillus pumilus (strain SAFR-032).